The sequence spans 500 residues: MKVNYGSPAKSGPLHKNGEFYINKNCFLHPLLFLSEENFYLTDGKRRSHGADANLVFGAWSTVAVKRLIGSVRDPNLNFLKIYDSVSVRNLTDGLDVDLYLHPLLKMTYLILGIALFPKIRAETSSKSKMLQSIHSMFLFLEDRFSKSNHILEADLPHNLHLETLIRLFRRQIKDVSFLHLLRIVFRKRKIFCGKTFYSPGGGQDGSVDIPVRNFYIFEIDSLLLIPWKQVYKFRVNYLSPIDSCNIIRKEIYASAYKFKWNKASIDYSFSRSLWIHYGRWRNKFLIASEGTHYFVKKMLYYLWILLKYHFHYRIKSNEPWIRKLLPTSCVSFLGYTLLAQLVSKNVRIETVTDLYISILGGKKFYPKIPNSIIITTLAKQRFCDFTGRPIGKSAWVTSTDDKIIDGYVQLWQVFSLYYGASMNQYRLRRLIFLLQMSCDSTLAGKHRSTIRLLRCKSNVEALNQILASRKFELSSSRRVWRSSSIRSVLVQFTVLDIGL.

It belongs to the intron maturase 2 family. MatK subfamily.

The protein resides in the plastid. Its subcellular location is the chloroplast. Its function is as follows. Usually encoded in the trnK tRNA gene intron. Probably assists in splicing its own and other chloroplast group II introns. The protein is Maturase K of Adiantum capillus-veneris (Maidenhair fern).